Consider the following 859-residue polypeptide: Collagen alpha-1(II) chain (859 aa).

The disordered stretch occupies residues 1-607 (LQGLPGKDGE…LGQTEKGPDP (607 aa)). 4-hydroxyproline is present on residues P31 and P40. The residue at position 42 (P42) is a 3-hydroxyproline. A 4-hydroxyproline mark is found at P43 and P46. The span at 78-121 (ERGSPGAQGLQGPRGLPGTPGTDGPKGATGPAGPNGAQGPPGLQ) shows a compositional bias: low complexity. The span at 136 to 147 (KGDRGDVGEKGP) shows a compositional bias: basic and acidic residues. Composition is skewed to low complexity over residues 204–220 (PAGFAGPPGADGQPGAK) and 249–277 (PTGVTGPKGARGAQGPPGATGFPGAAGRV). P279 carries the post-translational modification 3-hydroxyproline. The span at 279 to 292 (PPGPNGNPGPPGPP) shows a compositional bias: pro residues. A 4-hydroxyproline mark is found at P280, P286, and P292. Residues 306 to 321 (DAGPPGRAGDPGLQGP) show a composition bias toward low complexity. Residues 487-501 (RGDKGETGEAGERGL) are compositionally biased toward basic and acidic residues. Positions 491 to 586 (GETGEAGERG…PGPPGPPGPP (96 aa)) are triple-helical region. A 3-hydroxyproline modification is found at P516. Low complexity predominate over residues 520–529 (SGDQGAAGPA). A 4-hydroxyproline modification is found at P553. The residue at position 558 (P558) is a 3-hydroxyproline. At P559 the chain carries 4-hydroxyproline. Residues 570-586 (PAGPPGNPGPPGPPGPP) are compositionally biased toward pro residues. Position 573 is a 3-hydroxyproline (P573). P574 and P577 each carry 4-hydroxyproline. The residue at position 579 (P579) is a 3-hydroxyproline. P580 and P583 each carry 4-hydroxyproline. P585 bears the 3-hydroxyproline mark. The residue at position 586 (P586) is a 4-hydroxyproline. The interval 587–613 (GTGIDMSAFAGLGQTEKGPDPIRYMRA) is nonhelical region (C-terminal). Residues 614-859 (DEAAGGLRQH…GVDIGPVCFL (246 aa)) constitute a propeptide, C-terminal propeptide. The region spanning 625–859 (VEVDATLKSL…GVDIGPVCFL (235 aa)) is the Fibrillar collagen NC1 domain. 3 disulfide bridges follow: C655–C687, C695–C857, and C765–C810. Ca(2+) contacts are provided by D673, N675, Q676, C678, and D681. The N-linked (GlcNAc...) asparagine glycan is linked to N760.

It belongs to the fibrillar collagen family. Homotrimers of alpha 1(II) chains. Contains mostly 4-hydroxyproline. Prolines at the third position of the tripeptide repeating unit (G-X-P) are 4-hydroxylated in some or all of the chains. Post-translationally, contains 3-hydroxyproline at a few sites. This modification occurs on the first proline residue in the sequence motif Gly-Pro-Hyp, where Hyp is 4-hydroxyproline. In terms of processing, lysine residues at the third position of the tripeptide repeating unit (G-X-Y) are 5-hydroxylated in some or all of the chains. O-glycosylated on hydroxylated lysine residues. The O-linked glycan consists of a Glc-Gal disaccharide.

It is found in the secreted. It localises to the extracellular space. The protein localises to the extracellular matrix. Its function is as follows. Type II collagen is specific for cartilaginous tissues. It is essential for the normal embryonic development of the skeleton, for linear growth and for the ability of cartilage to resist compressive forces. The sequence is that of Collagen alpha-1(II) chain from Gallus gallus (Chicken).